A 444-amino-acid chain; its full sequence is Glutamate--tRNA ligase 2 (444 aa).

A 'HIGH' region motif is present at residues 8–18; that stretch reads PSPTGHLHAGN. The 'KMSKS' region motif lies at 241–245; that stretch reads KLSKR. Lys244 provides a ligand contact to ATP.

This sequence belongs to the class-I aminoacyl-tRNA synthetase family. Glutamate--tRNA ligase type 1 subfamily. Monomer.

The protein resides in the cytoplasm. The catalysed reaction is tRNA(Glu) + L-glutamate + ATP = L-glutamyl-tRNA(Glu) + AMP + diphosphate. In terms of biological role, catalyzes the attachment of glutamate to tRNA(Glu) in a two-step reaction: glutamate is first activated by ATP to form Glu-AMP and then transferred to the acceptor end of tRNA(Glu). The chain is Glutamate--tRNA ligase 2 from Acidiphilium cryptum (strain JF-5).